The sequence spans 235 residues: MEEKKPEQDEFGYHLFPERGNGESKKNSILSKSLFSFNHKCQLMLKIALDTSPYAKLLLDAMKQSGCTVYKDRHFSCEECDGSVSGGFDAATSEIVLCQNNIHQQSHMNRVVTHELIHAFDHCRAHVDWFNNVRHLACSEIRAANLSGDCTLANELTRFKFGVKGHHQVCVRDRALRSILAVRNISRETAEKAVDEVFDSCFNDHEPFGRIPHSKADAKFAYRDFQNRDRYYANL.

His-114 contacts a divalent metal cation. Glu-115 is a catalytic residue. His-118 serves as a coordination point for a divalent metal cation.

This sequence belongs to the peptidase M76 family.

This Xenopus laevis (African clawed frog) protein is Mitochondrial inner membrane protease ATP23 homolog (atp23).